The following is a 288-amino-acid chain: Homoserine kinase (288 aa).

Residue Pro78 to Ser88 participates in ATP binding.

This sequence belongs to the GHMP kinase family. Homoserine kinase subfamily.

It localises to the cytoplasm. It catalyses the reaction L-homoserine + ATP = O-phospho-L-homoserine + ADP + H(+). The protein operates within amino-acid biosynthesis; L-threonine biosynthesis; L-threonine from L-aspartate: step 4/5. Catalyzes the ATP-dependent phosphorylation of L-homoserine to L-homoserine phosphate. This Streptococcus agalactiae serotype V (strain ATCC BAA-611 / 2603 V/R) protein is Homoserine kinase.